A 330-amino-acid polypeptide reads, in one-letter code: MMRGCHICKLPGRVMGIRVLRFSLVVILVLLLVAGALTNLLPNIKEDKMLTLRREIKSPSKSALDSFTLIMQTYNRTDLLLRLLNHYQAVPSLHKVIVVWNNVGEKGPEELWNSLGPHPIPVIFKPQTANKMRNRLQVFPEVETNAVLMVDDDTLISAQDLVFAFSIWQQFPDQIIGFVPRKHVSTSSGIYSYGGFELQTPGPGNGDQYSMVLIGASFFNSKYLELFQKQPAAVHALIDETQNCDDIAMNFLVTRHTGKPSGIFVKPINMVNLEKETNGYSGMWHRAEHFLQRSYCINKLVNIYDGMPLKYSNIMISQFGFPYANHKSKM.

Topologically, residues 1-21 (MMRGCHICKLPGRVMGIRVLR) are cytoplasmic. The chain crosses the membrane as a helical; Signal-anchor for type II membrane protein span at residues 22 to 42 (FSLVVILVLLLVAGALTNLLP). The Lumenal portion of the chain corresponds to 43-330 (NIKEDKMLTL…FPYANHKSKM (288 aa)). Position 72 (Q72) interacts with UDP-N-acetyl-alpha-D-galactosamine. Q72 contacts UDP-N-acetyl-alpha-D-glucosamine. N75 carries an N-linked (GlcNAc...) asparagine glycan. R76, N101, N130, R135, D151, D152, D153, and D245 together coordinate UDP-N-acetyl-alpha-D-galactosamine. UDP-N-acetyl-alpha-D-glucosamine is bound by residues R76, N101, N130, R135, D151, D152, D153, D245, D246, and R293. D153 is a binding site for Mn(2+). A disulfide bond links C244 and C296. D246 is an active-site residue. R293 is a binding site for UDP-N-acetyl-alpha-D-galactosamine.

Belongs to the glycosyltransferase 47 family. Mn(2+) is required as a cofactor.

It is found in the endoplasmic reticulum membrane. It catalyses the reaction 3-O-(beta-D-GlcA-(1-&gt;3)-beta-D-Gal-(1-&gt;3)-beta-D-Gal-(1-&gt;4)-beta-D-Xyl)-L-seryl-[protein] + UDP-N-acetyl-alpha-D-glucosamine = 3-O-(alpha-D-GlcNAc-(1-&gt;4)-beta-D-GlcA-(1-&gt;3)-beta-D-Gal-(1-&gt;3)-beta-D-Gal-(1-&gt;4)-beta-D-Xyl)-L-seryl-[protein] + UDP + H(+). In terms of biological role, glycosyltransferase required for the biosynthesis of heparan-sulfate and responsible for the alternating addition of beta-1-4-linked glucuronic acid (GlcA) and alpha-1-4-linked N-acetylglucosamine (GlcNAc) units to nascent heparan sulfate chains. This is Exostosin-like 2 (Extl2) from Mus musculus (Mouse).